A 131-amino-acid chain; its full sequence is Small ribosomal subunit protein bS6 (131 aa).

Residues 98–131 are disordered; it reads EASPMVKAKDERRERREDFANETADDSEAGDSEE. The span at 104-116 shows a compositional bias: basic and acidic residues; it reads KAKDERRERREDF. The span at 120 to 131 shows a compositional bias: acidic residues; that stretch reads TADDSEAGDSEE.

The protein belongs to the bacterial ribosomal protein bS6 family.

Functionally, binds together with bS18 to 16S ribosomal RNA. This is Small ribosomal subunit protein bS6 from Klebsiella pneumoniae subsp. pneumoniae (strain ATCC 700721 / MGH 78578).